The following is a 172-amino-acid chain: MASNFKKTTMASSAQRKRMSPKPELTEDQKQEIREAFDLFDADGTGTIDIKELKVAMRALGFEPKKEEIKKMISEIDKEGTGKMNFSDFLTVMTQKMSEKDTKEEILKAFKLFDDDETGKISFKNLKRVAKELGENLTDEELQEMIDEADRDGDGEVNEQEFLRIMKKTSLY.

Positions methionine 1 to alanine 14 are enriched in polar residues. Residues methionine 1 to glutamine 31 form a disordered region. Position 2 is an N-acetylalanine (alanine 2). Residues alanine 2–leucine 25 form a required for self-assembly region. The residue at position 20 (serine 20) is a Phosphoserine. Lysine 22 participates in a covalent cross-link: Glycyl lysine isopeptide (Lys-Gly) (interchain with G-Cter in SUMO2). Phosphothreonine is present on threonine 26. EF-hand domains are found at residues aspartate 28–glutamate 63, proline 64–glutamate 99, aspartate 101–asparagine 136, and leucine 137–tyrosine 172. Residues aspartate 41, aspartate 43, threonine 45, threonine 47, and glutamate 52 each contribute to the Ca(2+) site. The Ca(2+) site is built by aspartate 150, aspartate 152, aspartate 154, glutamate 156, and glutamate 161.

The protein belongs to the centrin family. Monomer. Homooligomer. Interacts with CCP110, SFI1. Component of the XPC complex composed of XPC, RAD23B and CETN2. Component of the nuclear pore complex (NPC)-associated TREX-2 complex (transcription and export complex 2), composed of at least GANP, 2 copies of ENY2, PCID2, SEM1/DSS1, and either centrin CETN2 or centrin CETN3. The TREX-2 complex also associates with ALYREF/ALY and with the nucleoporin NUP153. Interacts with USP49. Forms a microtubule-associated complex with POC5, POC1B and FAM161A. Interacts with CCDC15. Ubiquitously expressed in all adult tissues tested, with strongest expression in brain, spleen, kidney, small intestine and ovary. Also expressed in the NIH 3T3 fibroblast cell line and peripheral blood lymphocytes.

It localises to the cytoplasm. Its subcellular location is the cytoskeleton. It is found in the microtubule organizing center. The protein resides in the centrosome. The protein localises to the centriole. It localises to the nucleus. Its subcellular location is the nucleus envelope. It is found in the nuclear pore complex. Its function is as follows. Plays a fundamental role in microtubule organizing center structure and function. Required for centriole duplication and correct spindle formation. Has a role in regulating cytokinesis and genome stability via cooperation with CALM1 and CCP110. Involved in global genome nucleotide excision repair (GG-NER) by acting as component of the XPC complex. Cooperatively with Rad23b appears to stabilize Xpc. In vitro, stimulates DNA binding of the Xpc:Rad23b dimer. In terms of biological role, the XPC complex is proposed to represent the first factor bound at the sites of DNA damage and together with other core recognition factors, Xpa, RPA and the TFIIH complex, is part of the pre-incision (or initial recognition) complex. The XPC complex recognizes a wide spectrum of damaged DNA characterized by distortions of the DNA helix such as single-stranded loops, mismatched bubbles or single-stranded overhangs. The orientation of XPC complex binding appears to be crucial for inducing a productive NER. XPC complex is proposed to recognize and to interact with unpaired bases on the undamaged DNA strand which is followed by recruitment of the TFIIH complex and subsequent scanning for lesions in the opposite strand in a 5'-to-3' direction by the NER machinery. Cyclobutane pyrimidine dimers (CPDs) which are formed upon UV-induced DNA damage esacpe detection by the XPC complex due to a low degree of structural perurbation. Instead they are detected by the UV-DDB complex which in turn recruits and cooperates with the XPC complex in the respective DNA repair. Functionally, as a component of the TREX-2 complex, involved in the export of mRNAs to the cytoplasm through the nuclear pores. This chain is Centrin-2 (Cetn2), found in Mus musculus (Mouse).